The primary structure comprises 1479 residues: Chromosome partition protein MukB (1479 aa).

34-41 (GGNGAGKS) contacts ATP. Coiled coils occupy residues 337-418 (LNLV…QYQQ), 511-603 (QAER…RAPV), 780-810 (RAAREMRLESLRDEREALAEQYATLSFDVQK), 847-1116 (ELDR…AKAG), and 1206-1265 (DDPV…LQAV). The tract at residues 666–783 (PGGSEDPRLN…EVPLFGRAAR (118 aa)) is flexible hinge.

It belongs to the SMC family. MukB subfamily. In terms of assembly, homodimerization via its hinge domain. Binds to DNA via its C-terminal region. Interacts, and probably forms a ternary complex, with MukE and MukF via its C-terminal region. The complex formation is stimulated by calcium or magnesium. Interacts with tubulin-related protein FtsZ.

It localises to the cytoplasm. The protein localises to the nucleoid. Plays a central role in chromosome condensation, segregation and cell cycle progression. Functions as a homodimer, which is essential for chromosome partition. Involved in negative DNA supercoiling in vivo, and by this means organize and compact chromosomes. May achieve or facilitate chromosome segregation by condensation DNA from both sides of a centrally located replisome during cell division. The sequence is that of Chromosome partition protein MukB from Pectobacterium carotovorum subsp. carotovorum (strain PC1).